The following is a 1198-amino-acid chain: DNA polymerase (1198 aa).

Disordered stretches follow at residues 1–90 (MALV…TVVA), 179–198 (LEQPDGQGQAAEVEDHQPNP), and 906–931 (ALADSDAEESEDERAPTPFYSPPSGT). Over residues 30–40 (QQPPRAAPAPA) the composition is skewed to low complexity.

This sequence belongs to the DNA polymerase type-B family. As to quaternary structure, heterodimer with the terminal protein; this heterodimer binds to bp 9 to 18 of the genome. Forms a complex with viral pTP, DBP and hosts NFIA and POU2F1/OCT1 for initiation of replication.

The protein resides in the host nucleus. It carries out the reaction DNA(n) + a 2'-deoxyribonucleoside 5'-triphosphate = DNA(n+1) + diphosphate. Functionally, eukaryotic-type DNA polymerase involved in viral genomic replication. DNA synthesis is protein primed, and acts in a strand displacement replication. Assembles in complex with viral pTP, DBP, host NFIA and host POU2F1/OCT1 on viral origin of replication. The polymerase covalently transfers dCMP onto pTP, thereby initiating complementary strand synthesis. The polypeptide is DNA polymerase (Homo sapiens (Human)).